The chain runs to 416 residues: MSQTLIQQDPEIAEAIRLETERQEYNLEFIASENFVSEQVMEAQGSIMTNKYAEGYPAKRYYGGCEMVDIAERLAIERAKELFGAEHANVQAHSGSQANMAVYFAACKPGDTVLGMNLAHGGHLTHGSPVNFSGKLFNIVSYGVQKETGYIDYEEVERLALEHKPTLLVVGASAYPRTIDFPAFRKIADKVGAKIMVDMAHIAGLVAAGVHPSPVPYAEFVTTTTHKTLRGPRGGMILCREEFAKTIDSNIFPGIQGGPLMHVIAAKAVSFKEALAPEFKEYSTQVVKNAKVLADALVKRGLNLVSGGTDNHLILVDFTGTETTGKMAEKALEKAGITVNKNSVPFETRSPFVTSGIRLGTPATTTRGLKEAEMERVADWVVRALDNMENDTELAAIKGEVREMCKRFPLYAHLLK.

(6S)-5,6,7,8-tetrahydrofolate is bound by residues leucine 118 and 122-124; that span reads GHL. Lysine 227 is subject to N6-(pyridoxal phosphate)lysine. Residues glutamate 242 and 350-352 each bind (6S)-5,6,7,8-tetrahydrofolate; that span reads SPF.

Belongs to the SHMT family. Homodimer. Requires pyridoxal 5'-phosphate as cofactor.

Its subcellular location is the cytoplasm. It catalyses the reaction (6R)-5,10-methylene-5,6,7,8-tetrahydrofolate + glycine + H2O = (6S)-5,6,7,8-tetrahydrofolate + L-serine. It participates in one-carbon metabolism; tetrahydrofolate interconversion. The protein operates within amino-acid biosynthesis; glycine biosynthesis; glycine from L-serine: step 1/1. Catalyzes the reversible interconversion of serine and glycine with tetrahydrofolate (THF) serving as the one-carbon carrier. This reaction serves as the major source of one-carbon groups required for the biosynthesis of purines, thymidylate, methionine, and other important biomolecules. Also exhibits THF-independent aldolase activity toward beta-hydroxyamino acids, producing glycine and aldehydes, via a retro-aldol mechanism. In Syntrophotalea carbinolica (strain DSM 2380 / NBRC 103641 / GraBd1) (Pelobacter carbinolicus), this protein is Serine hydroxymethyltransferase.